Reading from the N-terminus, the 546-residue chain is 2-isopropylmalate synthase (546 aa).

Positions isoleucine 5–threonine 274 constitute a Pyruvate carboxyltransferase domain. Residues aspartate 14, histidine 209, histidine 211, and asparagine 245 each coordinate Mn(2+). Positions arginine 415 to glutamate 546 are regulatory domain.

Belongs to the alpha-IPM synthase/homocitrate synthase family. LeuA type 1 subfamily. In terms of assembly, homodimer. It depends on Mn(2+) as a cofactor.

It localises to the cytoplasm. It catalyses the reaction 3-methyl-2-oxobutanoate + acetyl-CoA + H2O = (2S)-2-isopropylmalate + CoA + H(+). The protein operates within amino-acid biosynthesis; L-leucine biosynthesis; L-leucine from 3-methyl-2-oxobutanoate: step 1/4. Functionally, catalyzes the condensation of the acetyl group of acetyl-CoA with 3-methyl-2-oxobutanoate (2-ketoisovalerate) to form 3-carboxy-3-hydroxy-4-methylpentanoate (2-isopropylmalate). This Salinibacter ruber (strain M8) protein is 2-isopropylmalate synthase.